The chain runs to 55 residues: Large ribosomal subunit protein bL33 (55 aa).

This sequence belongs to the bacterial ribosomal protein bL33 family.

In Blochmanniella pennsylvanica (strain BPEN), this protein is Large ribosomal subunit protein bL33.